We begin with the raw amino-acid sequence, 162 residues long: Novel acetylcholine receptor chaperone (162 aa).

The Cytoplasmic segment spans residues 1–5; that stretch reads MASPR. Residues 6–26 traverse the membrane as a helical segment; the sequence is TVTIVALSVTLGLFFVFMGTI. Over 27-61 the chain is Lumenal; it reads KLTPRLSKDAYSEMKRAYKSYVKALPALKKIGISS. Residues 62 to 82 traverse the membrane as a helical segment; that stretch reads VFLRKAIGSLELACGIVLTLV. At 83-88 the chain is on the cytoplasmic side; sequence PGRPKD. The helical transmembrane segment at 89-109 threads the bilayer; it reads VANFILLLLVLIVLFFHQLVG. Topologically, residues 110-114 are lumenal; it reads DPLKR. Residues 115-131 form a helical membrane-spanning segment; the sequence is YAHALVFGILLTCRLLV. Over 132–162 the chain is Cytoplasmic; that stretch reads SRQPEEEFPEKKLSRGNNGAHSREPIKMKVS. The tract at residues 141-162 is disordered; sequence EKKLSRGNNGAHSREPIKMKVS. The segment covering 152 to 162 has biased composition (basic and acidic residues); that stretch reads HSREPIKMKVS.

The protein belongs to the DoxX family.

It localises to the peroxisome membrane. It is found in the cytoplasmic vesicle. Its subcellular location is the endoplasmic reticulum membrane. In terms of biological role, molecular chaperone which mediates the proper assembly and functional expression of the nicotinic acetylcholine receptors (nAChRs) throughout the brain. Essential for the proper folding, assembly, function and surface trafficking of alpha-7 (CHRNA7), alpha-4-beta-2, alpha-3-beta-2 and alpha-3-beta-4 receptors. The polypeptide is Novel acetylcholine receptor chaperone (tmem35a) (Xenopus tropicalis (Western clawed frog)).